Reading from the N-terminus, the 95-residue chain is Small ribosomal subunit protein bS18 (95 aa).

Belongs to the bacterial ribosomal protein bS18 family. In terms of assembly, part of the 30S ribosomal subunit. Forms a tight heterodimer with protein bS6.

In terms of biological role, binds as a heterodimer with protein bS6 to the central domain of the 16S rRNA, where it helps stabilize the platform of the 30S subunit. This Rickettsia typhi (strain ATCC VR-144 / Wilmington) protein is Small ribosomal subunit protein bS18.